Consider the following 133-residue polypeptide: Large-conductance mechanosensitive channel (133 aa).

The next 2 membrane-spanning stretches (helical) occupy residues 14–34 and 73–93; these read VVDL…VTTL and FITV…MVVV.

It belongs to the MscL family. In terms of assembly, homopentamer.

It is found in the cell membrane. Channel that opens in response to stretch forces in the membrane lipid bilayer. May participate in the regulation of osmotic pressure changes within the cell. This Renibacterium salmoninarum (strain ATCC 33209 / DSM 20767 / JCM 11484 / NBRC 15589 / NCIMB 2235) protein is Large-conductance mechanosensitive channel.